The following is a 249-amino-acid chain: ATP synthase subunit a (249 aa).

Helical transmembrane passes span 26–46, 84–104, 114–134, 143–163, 185–205, and 208–228; these read FTNS…FLYL, FFPF…LGLF, IVVT…YGFW, LFVP…IEVI, ITLK…VAGA, and AVLP…VAFL.

It belongs to the ATPase A chain family. F-type ATPases have 2 components, CF(1) - the catalytic core - and CF(0) - the membrane proton channel. CF(1) has five subunits: alpha(3), beta(3), gamma(1), delta(1), epsilon(1). CF(0) has three main subunits: a(1), b(2) and c(9-12). The alpha and beta chains form an alternating ring which encloses part of the gamma chain. CF(1) is attached to CF(0) by a central stalk formed by the gamma and epsilon chains, while a peripheral stalk is formed by the delta and b chains.

It is found in the cell inner membrane. In terms of biological role, key component of the proton channel; it plays a direct role in the translocation of protons across the membrane. The polypeptide is ATP synthase subunit a (Chelativorans sp. (strain BNC1)).